The primary structure comprises 811 residues: N-terminal acetyltransferase B complex subunit arm1 (811 aa).

Belongs to the MDM20/NAA25 family. Component of the N-terminal acetyltransferase B (NatB) complex.

The protein localises to the cytoplasm. Functionally, non-catalytic subunit of the NatB N-terminal acetyltransferase, which catalyzes acetylation of the amino-terminal methionine residues of all proteins beginning with Met-Asp or Met-Glu and of some proteins beginning with Met-Asn or Met-Met. The chain is N-terminal acetyltransferase B complex subunit arm1 (arm1) from Schizosaccharomyces pombe (strain 972 / ATCC 24843) (Fission yeast).